We begin with the raw amino-acid sequence, 117 residues long: MNPIRRRKIEAEAVRTVAMMILSGKVKDPRVHMVSVHRAEISEDGKNMKVFVTAICTDKKKLKVLSGLNSAAGLFQTTLSGKLGLRITPRMQFLWDEEYIQSLDESLRLTRKPTSAD.

It belongs to the RbfA family. Monomer. Binds 30S ribosomal subunits, but not 50S ribosomal subunits or 70S ribosomes.

It localises to the cytoplasm. Functionally, one of several proteins that assist in the late maturation steps of the functional core of the 30S ribosomal subunit. Associates with free 30S ribosomal subunits (but not with 30S subunits that are part of 70S ribosomes or polysomes). Required for efficient processing of 16S rRNA. May interact with the 5'-terminal helix region of 16S rRNA. In Leptospira borgpetersenii serovar Hardjo-bovis (strain JB197), this protein is Ribosome-binding factor A.